Here is a 2419-residue protein sequence, read N- to C-terminus: Telomere-associated protein RIF1 (2419 aa).

2 disordered regions span residues 1 to 24 (MTAP…VPPG) and 373 to 408 (SIPS…SPRG). Residues 373 to 385 (SIPSPQGNSSRGS) show a composition bias toward polar residues. 5 positions are modified to phosphoserine: serine 385, serine 391, serine 779, serine 976, and serine 1005. Phosphothreonine is present on threonine 1044. A compositionally biased stretch (low complexity) spans 1184–1198 (SSSTETSVVSSSSVS). 2 disordered regions span residues 1184-1594 (SSST…QAVP) and 1613-1637 (RVIL…EKSK). 2 stretches are compositionally biased toward polar residues: residues 1199–1217 (NATF…QTFI) and 1228–1255 (RPFS…TNTD). Threonine 1215 bears the Phosphothreonine mark. Residues serine 1231 and serine 1233 each carry the phosphoserine modification. Basic and acidic residues predominate over residues 1263-1272 (REVTNSKSDS). Over residues 1289-1302 (AEQSVTKKSKPSLT) the composition is skewed to polar residues. A compositionally biased stretch (basic and acidic residues) spans 1323–1345 (HVSENDDHPSEATLEHKDGDPKP). A phosphoserine mark is found at serine 1407, serine 1439, serine 1457, and serine 1498. Residues 1416-1455 (SQERESGQQKKERRKEEEKIISKSPLRIKDDKLPTQKLTD) show a composition bias toward basic and acidic residues. Over residues 1457–1467 (SPIQENLTEKG) the composition is skewed to polar residues. A Phosphothreonine modification is found at threonine 1504. Residues 1507–1516 (NLDKSSEKPL) are compositionally biased toward basic and acidic residues. The span at 1525-1537 (RRASQGLISAVEN) shows a compositional bias: polar residues. Phosphoserine occurs at positions 1528, 1538, 1540, 1542, and 1550. The segment covering 1551-1560 (RKKRSGKWKN) has biased composition (basic residues). Residues serine 1562 and serine 1565 each carry the phosphoserine modification. Positions 1572–1581 (EEKKAEEEVM) are enriched in basic and acidic residues. Phosphoserine occurs at positions 1680 and 1683. The residue at position 1780 (threonine 1780) is a Phosphothreonine. Position 1784 is a phosphoserine (serine 1784). A disordered region spans residues 1812 to 1836 (ASEAVSEIQGPCSENHSPAEDPGLS). Serine 1842 bears the Phosphoserine mark. Residues 1882 to 2419 (DAFVAADSEK…RWRSPAHENS (538 aa)) are interaction with condensed chromosomes in telophase. 2 disordered regions span residues 1890–1914 (EKST…ECEA) and 1929–1983 (FNSG…AQMS). Serine 1931, serine 2094, serine 2109, serine 2121, serine 2125, serine 2144, serine 2153, serine 2208, serine 2287, serine 2341, serine 2413, and serine 2419 each carry phosphoserine. An interaction with ERCC6 region spans residues 2119 to 2394 (VWSPLASPST…TGSQLFEMHE (276 aa)). Positions 2182–2212 (SPIIKSVKTSPTSHSKHNTTSAKGFLSPGSQ) are disordered. Residues 2189 to 2212 (KTSPTSHSKHNTTSAKGFLSPGSQ) show a composition bias toward polar residues.

Belongs to the RIF1 family. Interacts with TP53BP1 (when phosphorylated by ATM). May interact with TRF2. Interacts with SHLD2. Interacts with ERCC6 (via WHD region). Interacts with ASTE1. In terms of tissue distribution, expressed in Sertoli cells, prospermatagonia, early primary spermatocytes, and in oocytes at all stages of their growth. Expressed in embryonic stem (ES) and embryonic germ (EG) cells: expression is lost upon differentiation.

The protein resides in the nucleus. The protein localises to the chromosome. It is found in the telomere. It localises to the cytoplasm. Its subcellular location is the cytoskeleton. The protein resides in the spindle. Functionally, key regulator of TP53BP1 that plays a key role in the repair of double-strand DNA breaks (DSBs) in response to DNA damage: acts by promoting non-homologous end joining (NHEJ)-mediated repair of DSBs. In response to DNA damage, interacts with ATM-phosphorylated TP53BP1. Interaction with TP53BP1 leads to dissociate the interaction between NUDT16L1/TIRR and TP53BP1, thereby unmasking the tandem Tudor-like domain of TP53BP1 and allowing recruitment to DNA DSBs. Once recruited to DSBs, RIF1 and TP53BP1 act by promoting NHEJ-mediated repair of DSBs. In the same time, RIF1 and TP53BP1 specifically counteract the function of BRCA1 by blocking DSBs resection via homologous recombination (HR) during G1 phase. Also required for immunoglobulin class-switch recombination (CSR) during antibody genesis, a process that involves the generation of DNA DSBs. Promotes NHEJ of dysfunctional telomeres. The chain is Telomere-associated protein RIF1 from Mus musculus (Mouse).